We begin with the raw amino-acid sequence, 885 residues long: DNA-directed RNA polymerase subunit Rpo1N (885 aa).

Residues cysteine 60, cysteine 63, cysteine 70, histidine 73, cysteine 100, cysteine 103, cysteine 150, and cysteine 153 each contribute to the Zn(2+) site. Positions 464, 466, and 468 each coordinate Mg(2+).

Belongs to the RNA polymerase beta' chain family. In terms of assembly, part of the RNA polymerase complex. Mg(2+) is required as a cofactor. Zn(2+) serves as cofactor.

The protein resides in the cytoplasm. The enzyme catalyses RNA(n) + a ribonucleoside 5'-triphosphate = RNA(n+1) + diphosphate. DNA-dependent RNA polymerase (RNAP) catalyzes the transcription of DNA into RNA using the four ribonucleoside triphosphates as substrates. Forms the clamp head domain. The chain is DNA-directed RNA polymerase subunit Rpo1N from Thermoplasma acidophilum (strain ATCC 25905 / DSM 1728 / JCM 9062 / NBRC 15155 / AMRC-C165).